The chain runs to 361 residues: S-adenosylmethionine decarboxylase proenzyme (361 aa).

Residues Glu8 and Glu11 contribute to the active site. Ser68 acts as the Schiff-base intermediate with substrate; via pyruvic acid in catalysis. Residue Ser68 is modified to Pyruvic acid (Ser); by autocatalysis. Cys82 acts as the Proton donor; for catalytic activity in catalysis. Active-site proton acceptor; for processing activity residues include Ser234 and His247. The disordered stretch occupies residues 341 to 361 (SCGSPRSTLHRCWSETENEEE).

It belongs to the eukaryotic AdoMetDC family. Pyruvate is required as a cofactor. Post-translationally, is synthesized initially as an inactive proenzyme. Formation of the active enzyme involves a self-maturation process in which the active site pyruvoyl group is generated from an internal serine residue via an autocatalytic post-translational modification. Two non-identical subunits are generated from the proenzyme in this reaction, and the pyruvate is formed at the N-terminus of the alpha chain, which is derived from the carboxyl end of the proenzyme. The post-translation cleavage follows an unusual pathway, termed non-hydrolytic serinolysis, in which the side chain hydroxyl group of the serine supplies its oxygen atom to form the C-terminus of the beta chain, while the remainder of the serine residue undergoes an oxidative deamination to produce ammonia and the pyruvoyl group blocking the N-terminus of the alpha chain.

The enzyme catalyses S-adenosyl-L-methionine + H(+) = S-adenosyl 3-(methylsulfanyl)propylamine + CO2. It functions in the pathway amine and polyamine biosynthesis; S-adenosylmethioninamine biosynthesis; S-adenosylmethioninamine from S-adenosyl-L-methionine: step 1/1. The protein is S-adenosylmethionine decarboxylase proenzyme (SAMDC) of Helianthus annuus (Common sunflower).